A 307-amino-acid polypeptide reads, in one-letter code: NAD(+) hydrolase TcpC (307 aa).

The chain crosses the membrane as a helical span at residues 22 to 42; sequence YNILFFIFLSIAIPFLLFLAW. Residues 169 to 303 form the TIR domain; the sequence is THYDFFISHA…EIARELAEIA (135 aa). NAD(+) is bound by residues 178–179 and Glu208; that span reads AK. Residue Glu244 is part of the active site.

In terms of assembly, interacts with host MYD88. Interacts with host TLR4.

It is found in the secreted. The protein localises to the membrane. The enzyme catalyses NAD(+) + H2O = ADP-D-ribose + nicotinamide + H(+). The catalysed reaction is NADP(+) + H2O = ADP-D-ribose 2'-phosphate + nicotinamide + H(+). In terms of biological role, virulence factor that suppresses host Toll-like receptor (TLR)-mediated cytokine production upon infection, thereby increasing bacterial burden in the urinary tract and promoting renal tissue damage. Acts as a NAD(+) hydrolase (NADase) by catalyzing cleavage of NAD(+) into ADP-D-ribose (ADPR) and nicotinamide. Also able to hydrolyze NADP(+), but not other NAD(+)-related molecules. This chain is NAD(+) hydrolase TcpC, found in Escherichia coli O6:H1 (strain CFT073 / ATCC 700928 / UPEC).